Reading from the N-terminus, the 527-residue chain is Exodeoxyribonuclease 7 large subunit (527 aa).

The disordered stretch occupies residues Ala499–Phe527.

It belongs to the XseA family. As to quaternary structure, heterooligomer composed of large and small subunits.

The protein localises to the cytoplasm. It catalyses the reaction Exonucleolytic cleavage in either 5'- to 3'- or 3'- to 5'-direction to yield nucleoside 5'-phosphates.. In terms of biological role, bidirectionally degrades single-stranded DNA into large acid-insoluble oligonucleotides, which are then degraded further into small acid-soluble oligonucleotides. This is Exodeoxyribonuclease 7 large subunit from Sinorhizobium fredii (strain NBRC 101917 / NGR234).